Here is a 132-residue protein sequence, read N- to C-terminus: uncharacterized protein (132 aa).

The segment at 113–132 is disordered; it reads LDPQSPLHSPPLSTSPDSRR.

This is an uncharacterized protein from Saccharomyces cerevisiae (strain ATCC 204508 / S288c) (Baker's yeast).